The primary structure comprises 397 residues: Serpin B10 (397 aa).

The short motif at 74-77 (KKRK) is the Nuclear localization signal element.

This sequence belongs to the serpin family. Ov-serpin subfamily.

The protein localises to the nucleus. It localises to the cytoplasm. Its function is as follows. Protease inhibitor that may play a role in the regulation of protease activities during hematopoiesis and apoptosis induced by TNF. May regulate protease activities in the cytoplasm and in the nucleus. The chain is Serpin B10 (SERPINB10) from Sorex araneus (Eurasian common shrew).